The sequence spans 169 residues: Crossover junction endodeoxyribonuclease RuvC (169 aa).

Catalysis depends on residues Asp11, Glu71, and Asp143. Mg(2+)-binding residues include Asp11, Glu71, and Asp143.

Belongs to the RuvC family. In terms of assembly, homodimer which binds Holliday junction (HJ) DNA. The HJ becomes 2-fold symmetrical on binding to RuvC with unstacked arms; it has a different conformation from HJ DNA in complex with RuvA. In the full resolvosome a probable DNA-RuvA(4)-RuvB(12)-RuvC(2) complex forms which resolves the HJ. The cofactor is Mg(2+).

It localises to the cytoplasm. It catalyses the reaction Endonucleolytic cleavage at a junction such as a reciprocal single-stranded crossover between two homologous DNA duplexes (Holliday junction).. In terms of biological role, the RuvA-RuvB-RuvC complex processes Holliday junction (HJ) DNA during genetic recombination and DNA repair. Endonuclease that resolves HJ intermediates. Cleaves cruciform DNA by making single-stranded nicks across the HJ at symmetrical positions within the homologous arms, yielding a 5'-phosphate and a 3'-hydroxyl group; requires a central core of homology in the junction. The consensus cleavage sequence is 5'-(A/T)TT(C/G)-3'. Cleavage occurs on the 3'-side of the TT dinucleotide at the point of strand exchange. HJ branch migration catalyzed by RuvA-RuvB allows RuvC to scan DNA until it finds its consensus sequence, where it cleaves and resolves the cruciform DNA. This Rhizobium leguminosarum bv. trifolii (strain WSM2304) protein is Crossover junction endodeoxyribonuclease RuvC.